The chain runs to 293 residues: Ribosomal protein L11 methyltransferase (293 aa).

Threonine 145, glycine 166, aspartate 188, and asparagine 230 together coordinate S-adenosyl-L-methionine.

The protein belongs to the methyltransferase superfamily. PrmA family.

The protein localises to the cytoplasm. The enzyme catalyses L-lysyl-[protein] + 3 S-adenosyl-L-methionine = N(6),N(6),N(6)-trimethyl-L-lysyl-[protein] + 3 S-adenosyl-L-homocysteine + 3 H(+). Methylates ribosomal protein L11. This is Ribosomal protein L11 methyltransferase from Salmonella dublin (strain CT_02021853).